A 127-amino-acid chain; its full sequence is Cliotide T3 (127 aa).

Positions 1–24 (MAYVRLTSLAVLFFLAASVMKTEG) are cleaved as a signal peptide. Positions 25–53 (GLPTCGETCTLGTCYVPDCSCSWPICMKN) form a cross-link, cyclopeptide (Gly-Asn). Intrachain disulfides connect Cys29/Cys43, Cys33/Cys45, and Cys38/Cys50. The propeptide at 54 to 127 (HIIAANAKTV…DLKMPLESTN (74 aa)) is removed in mature form.

Contains 3 disulfide bonds. In terms of processing, this is a cyclic peptide. Expressed in flower, stem, shoot, leaf and seed but not in root, pod and nodule (at protein level).

Probably participates in a plant defense mechanism. Not active against Gram-negative bacteria E.coli ATCC 700926, K.pneumoniae ATTC 13883 and P.aeruginosa ATCC 39018 at concentration up to 100 uM. Has cytotoxic and hemolytic activity. The sequence is that of Cliotide T3 from Clitoria ternatea (Butterfly pea).